The following is a 652-amino-acid chain: Acetyl-coenzyme A synthetase (652 aa).

CoA is bound by residues Arg191–Arg194, Thr311, and Asn335. ATP-binding positions include Gly387–Pro389, Asp411–Thr416, Asp500, and Arg515. Ser523 provides a ligand contact to CoA. Arg526 lines the ATP pocket. The Mg(2+) site is built by Val537, His539, and Ile542. Arg584 serves as a coordination point for CoA. At Lys609 the chain carries N6-acetyllysine.

This sequence belongs to the ATP-dependent AMP-binding enzyme family. It depends on Mg(2+) as a cofactor. Acetylated. Deacetylation by the SIR2-homolog deacetylase activates the enzyme.

It catalyses the reaction acetate + ATP + CoA = acetyl-CoA + AMP + diphosphate. In terms of biological role, catalyzes the conversion of acetate into acetyl-CoA (AcCoA), an essential intermediate at the junction of anabolic and catabolic pathways. Acs undergoes a two-step reaction. In the first half reaction, Acs combines acetate with ATP to form acetyl-adenylate (AcAMP) intermediate. In the second half reaction, it can then transfer the acetyl group from AcAMP to the sulfhydryl group of CoA, forming the product AcCoA. Functionally, enables the cell to use acetate during aerobic growth to generate energy via the TCA cycle, and biosynthetic compounds via the glyoxylate shunt. Acetylates CheY, the response regulator involved in flagellar movement and chemotaxis. The polypeptide is Acetyl-coenzyme A synthetase (Citrobacter koseri (strain ATCC BAA-895 / CDC 4225-83 / SGSC4696)).